We begin with the raw amino-acid sequence, 283 residues long: Lectin subunit alpha (283 aa).

Positions 1–23 (MSLTMKNVEGFVIFLVIFTSTAA) are cleaved as a signal peptide. A C-type lectin domain is found at 51–159 (HECARHDQQL…NVKMGYICEP (109 aa)). 2 disulfides stabilise this stretch: cysteine 53/cysteine 157 and cysteine 132/cysteine 149.

Role in the defense system of the organism against microorganisms. This lectin binds galactose. The chain is Lectin subunit alpha from Sarcophaga peregrina (Flesh fly).